Consider the following 283-residue polypeptide: Bifunctional protein FolD 2 (283 aa).

Residues 165 to 167 (GRG), threonine 192, and valine 233 contribute to the NADP(+) site.

This sequence belongs to the tetrahydrofolate dehydrogenase/cyclohydrolase family. In terms of assembly, homodimer.

It carries out the reaction (6R)-5,10-methylene-5,6,7,8-tetrahydrofolate + NADP(+) = (6R)-5,10-methenyltetrahydrofolate + NADPH. It catalyses the reaction (6R)-5,10-methenyltetrahydrofolate + H2O = (6R)-10-formyltetrahydrofolate + H(+). The protein operates within one-carbon metabolism; tetrahydrofolate interconversion. Functionally, catalyzes the oxidation of 5,10-methylenetetrahydrofolate to 5,10-methenyltetrahydrofolate and then the hydrolysis of 5,10-methenyltetrahydrofolate to 10-formyltetrahydrofolate. The polypeptide is Bifunctional protein FolD 2 (Saccharopolyspora erythraea (strain ATCC 11635 / DSM 40517 / JCM 4748 / NBRC 13426 / NCIMB 8594 / NRRL 2338)).